A 174-amino-acid chain; its full sequence is Dual-action ribosomal maturation protein DarP (174 aa).

It belongs to the DarP family.

Its subcellular location is the cytoplasm. Functionally, member of a network of 50S ribosomal subunit biogenesis factors which assembles along the 30S-50S interface, preventing incorrect 23S rRNA structures from forming. Promotes peptidyl transferase center (PTC) maturation. The protein is Dual-action ribosomal maturation protein DarP of Pseudomonas aeruginosa (strain LESB58).